A 1161-amino-acid polypeptide reads, in one-letter code: Lysine-specific demethylase 2A (1161 aa).

A Phosphoserine modification is found at Ser-28. One can recognise a JmjC domain in the interval 148-316 (FSHTRLENMV…MQLKIYSIED (169 aa)). Substrate is bound at residue Thr-209. 2 residues coordinate Fe cation: His-212 and Asp-214. Lys-229 serves as a coordination point for substrate. Fe cation is bound at residue His-284. Residues Ser-390 and Ser-394 each carry the phosphoserine modification. Residues 419–433 (KTLSGDSSSDSTRGS) show a composition bias toward low complexity. Residues 419–445 (KTLSGDSSSDSTRGSHNGQVWDPQCSP) are disordered. Ser-444 carries the post-translational modification Phosphoserine. Lys-505 participates in a covalent cross-link: Glycyl lysine isopeptide (Lys-Gly) (interchain with G-Cter in SUMO2). The segment at 532–557 (VPTIPITKPHTMKPAPRLTPVRPAAA) is disordered. Thr-550 bears the Phosphothreonine mark. A Phosphoserine modification is found at Ser-558. The CXXC-type zinc-finger motif lies at 564–610 (ARRRRVRCRKCKACVQGECGVCHYCRDMKKFGGPGRMKQSCVLRQCL). Cys-571, Cys-574, Cys-577, Cys-582, Cys-585, Cys-588, Cys-604, Cys-609, Cys-620, and Cys-623 together coordinate Zn(2+). The PHD-type zinc finger occupies 617–678 (SVTCSLCGEV…CWECPKCYQE (62 aa)). Thr-632 carries the phosphothreonine modification. The Zn(2+) site is built by Cys-642, Cys-645, His-650, Cys-653, Cys-672, and Cys-675. Ser-692 carries the phosphoserine modification. Residues 705 to 789 (LRSCEEPLTP…PSGKKELSEV (85 aa)) form a disordered region. Phosphothreonine is present on Thr-713. 2 positions are modified to phosphoserine: Ser-718 and Ser-731. Basic and acidic residues-rich tracts occupy residues 746-757 (SDHHSASRDERF) and 771-789 (TMVREKENNPSGKKELSEV). Ser-825, Ser-868, and Ser-882 each carry phosphoserine. A disordered region spans residues 840 to 886 (CPARNPQHGDEEGLGGEEEEEEEEEEDDSAEEGGAARLNGRGSWAQD). Acidic residues predominate over residues 851 to 870 (EGLGGEEEEEEEEEEDDSAE). Residues 888–935 (DESWMQREVWMSVFRYLSRKELCECMRVCKTWYKWCCDKRLWTKIDLS) enclose the F-box domain. LRR repeat units lie at residues 960-981 (WTNISKKQLTWLVNRLPGLKDL) and 983-1009 (LAGCSWSAVSALSTSSCPLLRTLDLRW). Arg-1019 carries the post-translational modification ADP-ribosylarginine. LRR repeat units lie at residues 1047 to 1072 (GLDITDATLRLIIRHMPLLSRLDLSH), 1073 to 1102 (CSHLTDQSSNLLTAVGSSTRYSLTELNMAG), 1103 to 1127 (CNKLTDQTLFFLRRIANVTLIDLRG), and 1128 to 1155 (CKQITRKACEHFISDLSINSLYCLSDEK).

Belongs to the JHDM1 histone demethylase family. In terms of assembly, part of a SCF (SKP1-cullin-F-box) protein ligase complex. Interacts with CBX5/HP1A; the interaction promotes CBX5 localization to chromatin. The SKP1-KDM2A complex interacts with UBB. The cofactor is Fe(2+). Post-translationally, mono-ADP-ribosylated at Arg-1019 in response to DNA damage, leading to displacement from chromatin, resulting in increased dimethylation of histone H3 at 'Lys-36'.

It is found in the nucleus. The protein resides in the nucleoplasm. The protein localises to the chromosome. The enzyme catalyses N(6),N(6)-dimethyl-L-lysyl(36)-[histone H3] + 2 2-oxoglutarate + 2 O2 = L-lysyl(36)-[histone H3] + 2 formaldehyde + 2 succinate + 2 CO2. Histone demethylase that specifically demethylates 'Lys-36' of histone H3, thereby playing a central role in histone code. Preferentially demethylates dimethylated H3 'Lys-36' residue while it has weak or no activity for mono- and tri-methylated H3 'Lys-36'. May also recognize and bind to some phosphorylated proteins and promote their ubiquitination and degradation. Required to maintain the heterochromatic state. Associates with centromeres and represses transcription of small non-coding RNAs that are encoded by the clusters of satellite repeats at the centromere. Required to sustain centromeric integrity and genomic stability, particularly during mitosis. Regulates circadian gene expression by repressing the transcriptional activator activity of CLOCK-BMAL1 heterodimer and RORA in a catalytically-independent manner. In Mus musculus (Mouse), this protein is Lysine-specific demethylase 2A (Kdm2a).